The following is a 1070-amino-acid chain: Duffy receptor gamma form (1070 aa).

The N-terminal stretch at 1 to 21 (MEGKKKRPLFFLLVLLLSHKA) is a signal peptide. The Extracellular portion of the chain corresponds to 22 to 1003 (NNVLFERMNG…SYECFTKGSS (982 aa)). N-linked (GlcNAc...) asparagine glycosylation is found at N134 and N179. Cystine bridges form between C214–C243 and C227–C234. The Cell attachment site motif lies at 279 to 281 (RGD). 4 cysteine pairs are disulfide-bonded: C296–C372, C410–C427, C422–C502, and C431–C500. Residues 518–912 (VGSGVESKAP…LNNRKLNRDQ (395 aa)) are disordered. Residues 526–541 (APSSNPINEAVKSSSG) show a composition bias toward polar residues. Composition is skewed to basic and acidic residues over residues 544-559 (KVQE…EGEG), 672-707 (GEVH…DDRS), and 714-731 (HTDE…KDTE). The N-linked (GlcNAc...) asparagine glycan is linked to N676. The span at 732 to 763 (TTGGSTLTPEQNVSVASDNGNVPGSGNKQNEG) shows a compositional bias: polar residues. N743 carries N-linked (GlcNAc...) asparagine glycosylation. Residues 766-776 (ALSGAESLESS) are compositionally biased toward low complexity. An N-linked (GlcNAc...) asparagine glycan is attached at N785. The segment covering 796–807 (GNEKDFQKHDFM) has biased composition (basic and acidic residues). The segment covering 814-863 (DQTSSDHTSSDQTSSDQTSSDQTSSDQTSSDQTSSDQTSSDQTSSDQTID) has biased composition (low complexity). Residues 864-888 (TEGHHRDNVRNPEIKSSEDMSKGDF) are compositionally biased toward basic and acidic residues. A compositionally biased stretch (polar residues) spans 890–906 (RNSNSNELYSHNNLNNR). N936 is a glycosylation site (N-linked (GlcNAc...) asparagine). Residues 1004 to 1025 (TGIVYFATGGAFLIILLLFASW) traverse the membrane as a helical segment. At 1026–1070 (NAASNDYEEEATFDEFEEYCYNIHRTPQMPNDIEHMQQFTPLDYS) the chain is on the cytoplasmic side.

The protein resides in the membrane. Its function is as follows. Binds to Neu5Gc-sialylated receptors on macaque erythrocytes. This Plasmodium knowlesi protein is Duffy receptor gamma form.